A 311-amino-acid chain; its full sequence is MANPLYQKHIISINDLSREDLELVLATAAKLKANPQPELLKHKVIASCFFEASTRTRLSFETSMHRLGASVVGFSDSANTSLGKKGETLADTISVISTYVDAIVMRHPQEGAARLATEFSGGVPVLNAGDGANQHPTQTLLDLFTIQETQGRLENLNVAMVGDLKYGRTVHSLTQALAKFSGNRFYFIAPDALAMPQYILDMLDEKGIAWSLHSAIDDVMAEVDILYMTRVQKERLDPSEYANVKAQFVLRAADLEGARANMKVLHPLPRIDEITTDVDKTPHAWYFQQAGNGIFARQALLALVLNSELAL.

Carbamoyl phosphate contacts are provided by Arg-55 and Thr-56. Lys-85 contacts L-aspartate. Carbamoyl phosphate contacts are provided by Arg-106, His-135, and Gln-138. 2 residues coordinate L-aspartate: Arg-168 and Arg-230. Positions 268 and 269 each coordinate carbamoyl phosphate.

The protein belongs to the aspartate/ornithine carbamoyltransferase superfamily. ATCase family. In terms of assembly, heterododecamer (2C3:3R2) of six catalytic PyrB chains organized as two trimers (C3), and six regulatory PyrI chains organized as three dimers (R2).

The enzyme catalyses carbamoyl phosphate + L-aspartate = N-carbamoyl-L-aspartate + phosphate + H(+). It participates in pyrimidine metabolism; UMP biosynthesis via de novo pathway; (S)-dihydroorotate from bicarbonate: step 2/3. In terms of biological role, catalyzes the condensation of carbamoyl phosphate and aspartate to form carbamoyl aspartate and inorganic phosphate, the committed step in the de novo pyrimidine nucleotide biosynthesis pathway. The chain is Aspartate carbamoyltransferase catalytic subunit from Klebsiella pneumoniae (strain 342).